The primary structure comprises 954 residues: Valine--tRNA ligase (954 aa).

The 'HIGH' region motif lies at 48–58 (PNVTGSLHMGH). The 'KMSKS' region signature appears at 560–564 (KMSKS). ATP is bound at residue Lys563. Positions 883-953 (AGFINKEAEL…IQEQYKAIEA (71 aa)) form a coiled coil.

Belongs to the class-I aminoacyl-tRNA synthetase family. ValS type 1 subfamily. As to quaternary structure, monomer.

The protein resides in the cytoplasm. It catalyses the reaction tRNA(Val) + L-valine + ATP = L-valyl-tRNA(Val) + AMP + diphosphate. Functionally, catalyzes the attachment of valine to tRNA(Val). As ValRS can inadvertently accommodate and process structurally similar amino acids such as threonine, to avoid such errors, it has a 'posttransfer' editing activity that hydrolyzes mischarged Thr-tRNA(Val) in a tRNA-dependent manner. This chain is Valine--tRNA ligase, found in Haemophilus influenzae (strain PittEE).